Here is a 483-residue protein sequence, read N- to C-terminus: Regulatory protein ViaA (483 aa).

Belongs to the ViaA family. In terms of assembly, homodimer. Interacts with RavA.

Its subcellular location is the cytoplasm. Component of the RavA-ViaA chaperone complex, which may act on the membrane to optimize the function of some of the respiratory chains. ViaA stimulates the ATPase activity of RavA. In Salmonella choleraesuis (strain SC-B67), this protein is Regulatory protein ViaA.